The sequence spans 529 residues: Bifunctional purine biosynthesis protein PurH (529 aa).

Positions 1 to 148 (MNNARPIRRA…KNHKDTTIIV (148 aa)) constitute an MGS-like domain.

Belongs to the PurH family.

It catalyses the reaction (6R)-10-formyltetrahydrofolate + 5-amino-1-(5-phospho-beta-D-ribosyl)imidazole-4-carboxamide = 5-formamido-1-(5-phospho-D-ribosyl)imidazole-4-carboxamide + (6S)-5,6,7,8-tetrahydrofolate. It carries out the reaction IMP + H2O = 5-formamido-1-(5-phospho-D-ribosyl)imidazole-4-carboxamide. Its pathway is purine metabolism; IMP biosynthesis via de novo pathway; 5-formamido-1-(5-phospho-D-ribosyl)imidazole-4-carboxamide from 5-amino-1-(5-phospho-D-ribosyl)imidazole-4-carboxamide (10-formyl THF route): step 1/1. It participates in purine metabolism; IMP biosynthesis via de novo pathway; IMP from 5-formamido-1-(5-phospho-D-ribosyl)imidazole-4-carboxamide: step 1/1. This is Bifunctional purine biosynthesis protein PurH from Shewanella piezotolerans (strain WP3 / JCM 13877).